The sequence spans 507 residues: DNA ligase B (507 aa).

The segment at 1–172 (MLLHDVAITS…AAAAGLSGAA (172 aa)) is not required for adenylyltransferase activity, required for nick joining. An ATP-binding site is contributed by Glu209. The active-site N6-AMP-lysine intermediate is Lys211. Positions 216, 231, 260, 300, 372, and 378 each coordinate ATP.

The protein belongs to the ATP-dependent DNA ligase family. Monomer. Mg(2+) is required as a cofactor.

It catalyses the reaction ATP + (deoxyribonucleotide)n-3'-hydroxyl + 5'-phospho-(deoxyribonucleotide)m = (deoxyribonucleotide)n+m + AMP + diphosphate.. Functionally, DNA ligase that seals nicks in double-stranded DNA during DNA replication, DNA recombination and DNA repair. The protein is DNA ligase B (ligB) of Mycobacterium tuberculosis (strain ATCC 25618 / H37Rv).